We begin with the raw amino-acid sequence, 406 residues long: Exo-alpha-sialidase (406 aa).

The first 20 residues, 1–20 (MQSMRFMILALLVQFLPAWA), serve as a signal peptide directing secretion. Substrate is bound by residues R59, R78, D84, and Q148. N235 carries N-linked (GlcNAc...) asparagine glycosylation. Residues R265, R322, 322 to 323 (RR), 331 to 332 (YD), K337, Y358, D376, and 376 to 378 (DFF) each bind substrate. N396 is a glycosylation site (N-linked (GlcNAc...) asparagine).

The protein belongs to the glycosyl hydrolase 33 family.

The enzyme catalyses Hydrolysis of alpha-(2-&gt;3)-, alpha-(2-&gt;6)-, alpha-(2-&gt;8)- glycosidic linkages of terminal sialic acid residues in oligosaccharides, glycoproteins, glycolipids, colominic acid and synthetic substrates.. In terms of biological role, sialidase is able to release sialic acid from a wide variety of natural substrates including bovine salivary mucin, colominic acid, bovine fetuin, a serum glycoprotein containing both alpha-2-6 and alpha-2-3-linkages in a ratio of about 3:2, and glycoproteins and glycolipids from thermally denatured human lung epithelial cells. Does not show any trans-sialidase activity since it is able to remove terminal sialic acid residues but is unable to catalyze their transfer to the acceptor substrate. 2-keto-3-deoxynononic acid (KDN) is the preferred substrate and A.fumigatus can utilize KDN as a sole carbon source. This chain is Exo-alpha-sialidase, found in Aspergillus fumigatus (strain ATCC MYA-4609 / CBS 101355 / FGSC A1100 / Af293) (Neosartorya fumigata).